The chain runs to 407 residues: MVSTLKRDEALFELIALEEKRQREGLELIASENFVSKQVREAVGSVLTNKYAEGYPGARYYGGCEAIDRVESLAIERAKALFGAAWANVQPHSGSQANMAVYMALMEPGDTLMGMDLAAGGHLTHGSRVNFSGKLYKVVSYGVRPDTELIDLEEVRRLALEHRPKVIVAGASAYPRFWDFKAFREIADEVGAYLVVDMAHFAGLVAAGLHPNPLPYAHVVTSTTHKTLRGPRGGLILSNDPELGKRIDKLIFPGIQGGPLEHVIAGKAVAFFEALQPEFKEYSRLVVENAKRLAEALARRGYRIVTGGTDNHLFLVDLRPKGLTGKEAEERLDAVGITVNKNAIPFDPKPPRVTSGIRIGTPAITTRGFTPEEMPLVAELIDRALLEGPSEALREEVRRLALAHPMP.

(6S)-5,6,7,8-tetrahydrofolate is bound by residues Leu117 and 121–123; that span reads GHL. Lys226 carries the N6-(pyridoxal phosphate)lysine modification. Glu242 contributes to the (6S)-5,6,7,8-tetrahydrofolate binding site.

It belongs to the SHMT family. As to quaternary structure, homodimer. Pyridoxal 5'-phosphate serves as cofactor.

The protein resides in the cytoplasm. It carries out the reaction (6R)-5,10-methylene-5,6,7,8-tetrahydrofolate + glycine + H2O = (6S)-5,6,7,8-tetrahydrofolate + L-serine. It functions in the pathway one-carbon metabolism; tetrahydrofolate interconversion. Its pathway is amino-acid biosynthesis; glycine biosynthesis; glycine from L-serine: step 1/1. Catalyzes the reversible interconversion of serine and glycine with tetrahydrofolate (THF) serving as the one-carbon carrier. This reaction serves as the major source of one-carbon groups required for the biosynthesis of purines, thymidylate, methionine, and other important biomolecules. Also exhibits THF-independent aldolase activity toward beta-hydroxyamino acids, producing glycine and aldehydes, via a retro-aldol mechanism. The protein is Serine hydroxymethyltransferase of Thermus thermophilus (strain ATCC BAA-163 / DSM 7039 / HB27).